The chain runs to 175 residues: ATP synthase subunit b (175 aa).

Residues 23–43 (TGITFLVLLFVLGKFAWGPIV) traverse the membrane as a helical segment.

This sequence belongs to the ATPase B chain family. F-type ATPases have 2 components, F(1) - the catalytic core - and F(0) - the membrane proton channel. F(1) has five subunits: alpha(3), beta(3), gamma(1), delta(1), epsilon(1). F(0) has three main subunits: a(1), b(2) and c(10-14). The alpha and beta chains form an alternating ring which encloses part of the gamma chain. F(1) is attached to F(0) by a central stalk formed by the gamma and epsilon chains, while a peripheral stalk is formed by the delta and b chains.

It is found in the cell inner membrane. In terms of biological role, f(1)F(0) ATP synthase produces ATP from ADP in the presence of a proton or sodium gradient. F-type ATPases consist of two structural domains, F(1) containing the extramembraneous catalytic core and F(0) containing the membrane proton channel, linked together by a central stalk and a peripheral stalk. During catalysis, ATP synthesis in the catalytic domain of F(1) is coupled via a rotary mechanism of the central stalk subunits to proton translocation. Functionally, component of the F(0) channel, it forms part of the peripheral stalk, linking F(1) to F(0). The chain is ATP synthase subunit b from Anaeromyxobacter sp. (strain Fw109-5).